The sequence spans 420 residues: Nucleobindin-2 (420 aa).

Residues 1–24 (MRWRTILLQYCFLLITCLLTALEA) form the signal peptide. The DNA-binding element occupies 171–223 (KTRHEEFKKYEMMKEHERREYLKTLNEEKRKEEESKFEEMKKKHENHPKVNHP). A compositionally biased stretch (basic and acidic residues) spans 195–212 (LNEEKRKEEESKFEEMKK). Residues 195 to 225 (LNEEKRKEEESKFEEMKKKHENHPKVNHPGS) are disordered. Positions 213–420 (KHENHPKVNH…AGELKFEPHI (208 aa)) are binds to necdin. EF-hand domains lie at 241–276 (PNDFDPKTFFKLHDVNSDGFLDEQELEALFTKELEK) and 293–328 (ERLRMREHVMNEVDTNKDRLVTLEEFLKATEKKEFL). Residues D254 and N256 each contribute to the Ca(2+) site. At S257 the chain carries Phosphoserine. D258, E265, D306, N308, D310, and E317 together coordinate Ca(2+). The short motif at 304–334 (EVDTNKDRLVTLEEFLKATEKKEFLEPDSWE) is the GBA element. S332 carries the phosphoserine modification. Residues 398 to 420 (QKKLQQGIPPSGPAGELKFEPHI) form a disordered region.

This sequence belongs to the nucleobindin family. In terms of assembly, interacts (via GBA motif) with guanine nucleotide-binding protein G(i) alpha subunit GNAI3. Preferentially interacts with inactive rather than active GNAI3. Interaction with GNAI3 is inhibited when NUCB2 binds calcium, probably due to a conformational change which renders the GBA motif inaccessible. Binds to the postmitotic growth suppressor NDN; coexpression abolishes NUCB2 secretion. Interacts with MC4R. In terms of tissue distribution, predominantly expressed in spleen, testis and normal stomach.

It localises to the golgi apparatus. Its subcellular location is the membrane. The protein localises to the cytoplasm. The protein resides in the secreted. It is found in the endoplasmic reticulum. It localises to the nucleus envelope. Calcium-binding protein which may have a role in calcium homeostasis. Acts as a non-receptor guanine nucleotide exchange factor which binds to and activates guanine nucleotide-binding protein (G-protein) alpha subunit GNAI3. In terms of biological role, anorexigenic peptide, seems to play an important role in hypothalamic pathways regulating food intake and energy homeostasis, acting in a leptin-independent manner. May also exert hypertensive roles and modulate blood pressure through directly acting on peripheral arterial resistance. In intestinal epithelial cells, plays a role in the inhibition of hepatic glucose production via MC4R receptor leading to increased cyclic adenosine monophosphate (cAMP) levels and glucagon-like peptide 1 (GLP-1) secretion. In Homo sapiens (Human), this protein is Nucleobindin-2.